The following is a 245-amino-acid chain: tRNA pseudouridine synthase A (245 aa).

Residue D52 is the Nucleophile of the active site. Substrate is bound at residue Y111.

Belongs to the tRNA pseudouridine synthase TruA family. In terms of assembly, homodimer.

The enzyme catalyses uridine(38/39/40) in tRNA = pseudouridine(38/39/40) in tRNA. Functionally, formation of pseudouridine at positions 38, 39 and 40 in the anticodon stem and loop of transfer RNAs. The sequence is that of tRNA pseudouridine synthase A from Rickettsia africae (strain ESF-5).